Here is a 1668-residue protein sequence, read N- to C-terminus: DNA polymerase (1668 aa).

DOD-type homing endonuclease domains lie at 739-872 (LLGY…SLGV) and 1191-1330 (LIGL…LVGV).

This sequence belongs to the DNA polymerase type-B family. This protein undergoes a protein self splicing that involves a post-translational excision of the intervening region (intein) followed by peptide ligation.

It catalyses the reaction DNA(n) + a 2'-deoxyribonucleoside 5'-triphosphate = DNA(n+1) + diphosphate. In terms of biological role, in addition to polymerase activity, this DNA polymerase exhibits 3' to 5' exonuclease activity. Functionally, PI-ThyI and PI-ThyII are endonucleases. PI-ThyI cleaves the inteinless sequence of the Thy DNA pol gene. It requires a 21-bp minimal recognition sequence. The sequence is that of DNA polymerase (pol) from Thermococcus hydrothermalis.